Consider the following 379-residue polypeptide: Chaperone protein DnaJ (379 aa).

Residues 5–70 enclose the J domain; that stretch reads DYYELLEVSR…QKRAAYDQFG (66 aa). The segment at 135–213 adopts a CR-type zinc-finger fold; it reads GKEVEITVPR…CHGQGRVRES (79 aa). Zn(2+)-binding residues include Cys148, Cys151, Cys165, Cys168, Cys187, Cys190, Cys201, and Cys204. 4 CXXCXGXG motif repeats span residues 148–155, 165–172, 187–194, and 201–208; these read CTVCEGSG, CETCQGMG, CPTCHGEG, and CASCHGQG.

Belongs to the DnaJ family. Homodimer. Zn(2+) is required as a cofactor.

It localises to the cytoplasm. Participates actively in the response to hyperosmotic and heat shock by preventing the aggregation of stress-denatured proteins and by disaggregating proteins, also in an autonomous, DnaK-independent fashion. Unfolded proteins bind initially to DnaJ; upon interaction with the DnaJ-bound protein, DnaK hydrolyzes its bound ATP, resulting in the formation of a stable complex. GrpE releases ADP from DnaK; ATP binding to DnaK triggers the release of the substrate protein, thus completing the reaction cycle. Several rounds of ATP-dependent interactions between DnaJ, DnaK and GrpE are required for fully efficient folding. Also involved, together with DnaK and GrpE, in the DNA replication of plasmids through activation of initiation proteins. The polypeptide is Chaperone protein DnaJ (Legionella pneumophila (strain Lens)).